A 146-amino-acid polypeptide reads, in one-letter code: 3-hydroxyacyl-[acyl-carrier-protein] dehydratase FabZ (146 aa).

Residue histidine 48 is part of the active site.

It belongs to the thioester dehydratase family. FabZ subfamily.

It is found in the cytoplasm. The enzyme catalyses a (3R)-hydroxyacyl-[ACP] = a (2E)-enoyl-[ACP] + H2O. Functionally, involved in unsaturated fatty acids biosynthesis. Catalyzes the dehydration of short chain beta-hydroxyacyl-ACPs and long chain saturated and unsaturated beta-hydroxyacyl-ACPs. The chain is 3-hydroxyacyl-[acyl-carrier-protein] dehydratase FabZ from Acetivibrio thermocellus (strain ATCC 27405 / DSM 1237 / JCM 9322 / NBRC 103400 / NCIMB 10682 / NRRL B-4536 / VPI 7372) (Clostridium thermocellum).